The chain runs to 381 residues: Homoserine O-succinyltransferase (381 aa).

In terms of domain architecture, AB hydrolase-1 spans Asn-45–Asp-360. Residue Ser-151 is the Nucleophile of the active site. Arg-221 is a binding site for substrate. Residues Asp-321 and His-354 contribute to the active site. Position 355 (Asp-355) interacts with substrate.

The protein belongs to the AB hydrolase superfamily. MetX family. Homodimer.

Its subcellular location is the cytoplasm. It catalyses the reaction L-homoserine + succinyl-CoA = O-succinyl-L-homoserine + CoA. It participates in amino-acid biosynthesis; L-methionine biosynthesis via de novo pathway; O-succinyl-L-homoserine from L-homoserine: step 1/1. Functionally, transfers a succinyl group from succinyl-CoA to L-homoserine, forming succinyl-L-homoserine. In Paraburkholderia phytofirmans (strain DSM 17436 / LMG 22146 / PsJN) (Burkholderia phytofirmans), this protein is Homoserine O-succinyltransferase.